The chain runs to 285 residues: Secreted RxLR effector protein 106 (285 aa).

The signal sequence occupies residues 1-24 (MSVRYAGLLLAAVAVSAHINEVNS). The short motif at 42-54 (RDLRSADNGNEER) is the RxLR-dEER element. N-linked (GlcNAc...) asparagine glycosylation is found at Asn-182 and Asn-187. Residues 220-229 (IEGDKEKKGG) are compositionally biased toward basic and acidic residues. A disordered region spans residues 220–262 (IEGDKEKKGGPDYVEGTESRGKKRGQTEAPDLEPGLTPKQKRL). A Bipartite nuclear localization signal motif is present at residues 239 to 264 (RGKKRGQTEAPDLEPGLTPKQKRLKR).

This sequence belongs to the RxLR effector family. As to quaternary structure, interacts with host RCD1 and SRO1 transcription co-regulators.

It is found in the secreted. The protein resides in the host nucleus. Secreted effector that suppresses pathogen-associated molecular pattern (PAMP)-triggered immunity (PTI) in host plants. Binds to RCD1 and SRO1 transcription co-regulators to attenuate transcriptional activation of salicylic acid (SA)-induced defense genes and alters plant growth responses to light. Suppresses SA signal transduction but not SA levels. In Hyaloperonospora arabidopsidis (strain Emoy2) (Downy mildew agent), this protein is Secreted RxLR effector protein 106.